Reading from the N-terminus, the 314-residue chain is DNA topoisomerase 1B (314 aa).

A Topo IB-type catalytic domain is found at 77-314 (VQNRNAKRDR…VDHVKSSTDG (238 aa)). The O-(3'-phospho-DNA)-tyrosine intermediate role is filled by Y274.

It belongs to the type IB topoisomerase family.

The enzyme catalyses ATP-independent breakage of single-stranded DNA, followed by passage and rejoining.. Functionally, releases the supercoiling and torsional tension of DNA introduced during the DNA replication and transcription by transiently cleaving and rejoining one strand of the DNA duplex. Introduces a single-strand break via transesterification at the specific target site 5'-[CT]CCTTp site in duplex DNA. The scissile phosphodiester is attacked by the catalytic tyrosine of the enzyme, resulting in the formation of a DNA-(3'-phosphotyrosyl)-enzyme intermediate and the expulsion of a 5'-OH DNA strand. The free DNA strand then undergoes passage around the unbroken strand thus removing DNA supercoils. Finally, in the religation step, the DNA 5'-OH attacks the covalent intermediate to expel the active-site tyrosine and restore the DNA phosphodiester backbone. The chain is DNA topoisomerase 1B (TOP1) from Vaccinia virus (strain Ankara) (VACV).